The primary structure comprises 438 residues: Glycerophosphocholine cholinephosphodiesterase ENPP6 (438 aa).

The first 22 residues, 1–22 (MTRTLLKIYTLFILLLCRQRDA), serve as a signal peptide directing secretion. The substrate site is built by D32, S69, and N90. 2 residues coordinate Zn(2+): D32 and S69. The active-site Nucleophile is S69. Phosphoserine is present on S69. Residues C140 and C152 are joined by a disulfide bond. The stretch at 162-226 (KNLTDSMENA…ILNQKIREKN (65 aa)) forms a coiled coil. An N-linked (GlcNAc...) asparagine glycan is attached at N163. Residue D191 participates in substrate binding. Residues D191, H195, D238, and H239 each coordinate Zn(2+). Residue H239 participates in substrate binding. N-linked (GlcNAc...) asparagine glycosylation is found at N258, N287, and N339. A substrate-binding site is contributed by H352. H352 is a Zn(2+) binding site. A glycan (N-linked (GlcNAc...) asparagine) is linked at N402. S415 carries GPI-anchor amidated serine lipidation. Positions 416 to 438 (AATAGASLISCCFLLLLTLTGVC) are cleaved as a propeptide — removed in mature form.

It belongs to the nucleotide pyrophosphatase/phosphodiesterase family. The cofactor is Zn(2+).

Its subcellular location is the cell membrane. The enzyme catalyses sn-glycerol 3-phosphocholine + H2O = phosphocholine + glycerol + H(+). It catalyses the reaction a 1-acyl-sn-glycero-3-phosphocholine + H2O = a 1-acyl-sn-glycerol + phosphocholine + H(+). It carries out the reaction a 1-O-alkyl-sn-glycero-3-phosphocholine + H2O = a 1-O-alkyl-sn-glycerol + phosphocholine + H(+). The catalysed reaction is 1-dodecanoyl-sn-glycero-3-phosphocholine + H2O = 1-dodecanoyl-sn-glycerol + phosphocholine + H(+). The enzyme catalyses 1-hexadecanoyl-sn-glycero-3-phosphocholine + H2O = 1-hexadecanoyl-sn-glycerol + phosphocholine + H(+). It catalyses the reaction 1-(5Z,8Z,11Z,14Z-eicosatetraenoyl)-sn-glycero-3-phosphocholine + H2O = 1-(5Z,8Z,11Z,14Z-eicosatetraenoyl)-sn-glycerol + phosphocholine + H(+). It carries out the reaction 1-tetradecanoyl-sn-glycero-3-phosphocholine + H2O = 1-tetradecanoyl-sn-glycerol + phosphocholine + H(+). The catalysed reaction is sphing-4-enine-phosphocholine + H2O = sphing-4-enine + phosphocholine + H(+). The enzyme catalyses 1-(9Z-octadecenoyl)-sn-glycero-3-phosphocholine + H2O = 1-(9Z-octadecenoyl)-sn-glycerol + phosphocholine + H(+). It catalyses the reaction 1-(9Z,12Z)-octadecadienoyl-sn-glycero-3-phosphocholine + H2O = 1-(9Z,12Z-octadecadienoyl)-sn-glycerol + phosphocholine + H(+). It carries out the reaction glycero-2-phosphocholine + H2O = phosphocholine + glycerol + H(+). Its function is as follows. Choline-specific glycerophosphodiesterase that hydrolyzes glycerophosphocholine (GPC) and lysophosphatidylcholine (LPC) and contributes to supplying choline to the cells. Has a preference for LPC with short (12:0 and 14:0) or polyunsaturated (18:2 and 20:4) fatty acids. In vitro, hydrolyzes only choline-containing lysophospholipids, such as sphingosylphosphorylcholine (SPC), platelet-activating factor (PAF) and lysoPAF, but not other lysophospholipids. This chain is Glycerophosphocholine cholinephosphodiesterase ENPP6, found in Danio rerio (Zebrafish).